Here is a 668-residue protein sequence, read N- to C-terminus: MVNIQTNTSYIFPQTQSTVLPDPSKFFSSNLLSSPLPTNSFFQNFVLKNGDQQEYIHPYLIKSSNSSLSLSYPSRQASSAVIFQVFNPDLTISAPQGPKQGPPGKHLISSYSDLSVTLDFPSSNLSFFLVRGSPYLTVSVTQPTPLSITTIHSILSFSSNDSNTKYTFQFNNGQTWLLYATSPIKLNHTLSEITSNAFSGIIRIALLPDSDSKHEAVLDKYSSCYPVSGKAVFREPFCVEYNWEKKDSGDLLLLAHPLHVQLLRNGDNDVKILEDLKYKSIDGDLVGVVGDSWVLKTDPLFVTWHSIKGIKEESHDEIVSALSKDVESLDSSSITTTESYFYGKLIARAARLVLIAEELNYPDVIPKVRNFLKETIEPWLEGTFSGNGFLHDEKWGGIITQKGSTDAGGDFGFGIYNDHHYHLGYFIYGIAVLTKLDPAWGRKYKPQAYSIVQDFLNLDTKLNSNYTRLRCFDPYVLHSWAGGLTEFTDGRNQESTSEAVSAYYSAALMGLAYGDAPLVALGSTLTALEIEGTKMWWHVKEGGTLYEKEFTQENRVMGVLWSNKRDTGLWFAPAEWKECRLGIQLLPLAPISEAIFSNVDFVKELVEWTLPALDREGGVGEGWKGFVYALEGVYDNESALQKIRNLKGFDGGNSLTNLLWWIHSRSDE.

The segment at 2-208 (VNIQTNTSYI…SGIIRIALLP (207 aa)) is beta-sandwich subdomain. Residues 2–668 (VNIQTNTSYI…LWWIHSRSDE (667 aa)) form the GH81 domain. N-linked (GlcNAc...) asparagine glycans are attached at residues N65, N124, N160, and N187. The alpha/beta subdomain stretch occupies residues 209–299 (DSDSKHEAVL…GDSWVLKTDP (91 aa)). The interval 240–443 (EYNWEKKDSG…TKLDPAWGRK (204 aa)) is involved in beta-glucan binding. A (alpha/beta)6 barrel subdomain region spans residues 309–668 (GIKEESHDEI…LWWIHSRSDE (360 aa)). Residue D418 is part of the active site. H422 provides a ligand contact to (1,3-beta-D-glucosyl)n. N-linked (GlcNAc...) asparagine glycosylation occurs at N465. Active-site residues include E494 and E498. E494 and E498 together coordinate (1,3-beta-D-glucosyl)n. The segment at 564-566 (KRD) is may provide specificity for triple-helical beta-glucan.

The protein belongs to the glycosyl hydrolase 81 family. In terms of tissue distribution, expressed in roots (at protein level). Expressed in leaves.

The protein resides in the secreted. Its subcellular location is the cell wall. The enzyme catalyses Hydrolysis of (1-&gt;3)-beta-D-glucosidic linkages in (1-&gt;3)-beta-D-glucans.. Cleaves internal linkages in 1,3-beta-glucan. Beta-glucan, a polysaccharide constituent of fungal cell walls, can act as an elicitor in the plant, triggering defense responses including phytoalexin synthesis. This Glycine max (Soybean) protein is Glucan endo-1,3-beta-D-glucosidase.